A 910-amino-acid polypeptide reads, in one-letter code: Protein translocase subunit SecA (910 aa).

Residues glutamine 87, glycine 105–threonine 109, and aspartate 501 contribute to the ATP site. The Zn(2+) site is built by cysteine 894, cysteine 896, cysteine 905, and histidine 906.

This sequence belongs to the SecA family. As to quaternary structure, monomer and homodimer. Part of the essential Sec protein translocation apparatus which comprises SecA, SecYEG and auxiliary proteins SecDF-YajC and YidC. Requires Zn(2+) as cofactor.

Its subcellular location is the cell inner membrane. The protein resides in the cytoplasm. It catalyses the reaction ATP + H2O + cellular proteinSide 1 = ADP + phosphate + cellular proteinSide 2.. Part of the Sec protein translocase complex. Interacts with the SecYEG preprotein conducting channel. Has a central role in coupling the hydrolysis of ATP to the transfer of proteins into and across the cell membrane, serving both as a receptor for the preprotein-SecB complex and as an ATP-driven molecular motor driving the stepwise translocation of polypeptide chains across the membrane. The polypeptide is Protein translocase subunit SecA (Acidiphilium cryptum (strain JF-5)).